Consider the following 879-residue polypeptide: MAGKSTPMMEQYLALKAEASAGGDDCLLFYRMGDFFELFFEDAKVASGILDIALTARGKDSGEPVPMCGVPVHSAEGYLARLIKAGQRVAIAEQVETPEEAKARARREGKPVSKVLVKRDIVRFVTAGTLTEEALLEPRRANVLAAVCEVRGTLGIAHCDISTGRMELEECAPDAMDAALARLGASEVVAPENWDGAPADATLRPPSEFASDEGEARLKAIHDVATLDGFGDFSRAMLAAAGGLIGYLDHAGRGTLPFLLPPVVARGEAKLAMDAATRSSLEILVSQQDARSGSLIAAVDRCVTGAGARQLAEDLAAPLTEREPIERRLALVHFFHADPLLRADLREVMRAVPDLARALGRIVAGRGSPRDLGQIRDGLAEARRIRDYLASKPDRPALLDDLLPAMGGHGALVDHLQRALVPAPPTAREQGGYIAAGFDAALDELRDVSGNARRAIAALETRYRGETGIERLKIKHNGVLGYFIEVPAKHADALMAPDSGFTHRQTMAGAVRFNSLQLHEEASRISEAGGRALAAEEAHFEELVATVGDAREAIARTADALARIDVAAGLAERAAEGDWCKPAITDERVLDIVGGRHPVVEAALKQAGDRFVPNDCTLSGSDRLWLIGGPNMGGKSTFLRQNALIVLLAQAGSYVPASTATIGLVDRLFSRVGASDNLARGRSTFMVEMVETAAILAQASDRSFVILDEVGRGTSTYDGLALAWAVVEAVHETIQCRCLFATHYHELARLAETCDSLSLHHVRAREWKGDLVLLHELAEGPADRSYGLAVAKLAGVPAPVVKRARSVLEKLEKGREETGGLAAGLGELPLFAAALEERPEKIGDSMREKLAALDIDALSPREALDLLYALKTEASQTED.

Position 629-636 (glycine 629–serine 636) interacts with ATP.

This sequence belongs to the DNA mismatch repair MutS family.

Functionally, this protein is involved in the repair of mismatches in DNA. It is possible that it carries out the mismatch recognition step. This protein has a weak ATPase activity. In Erythrobacter litoralis (strain HTCC2594), this protein is DNA mismatch repair protein MutS.